Reading from the N-terminus, the 224-residue chain is Zinc finger C4H2 domain-containing protein (224 aa).

Positions 11-104 (LESIKEIRNK…RRLHDEYKPL (94 aa)) form a coiled coil. The C4H2-type zinc-finger motif lies at 189-206 (CLSCHQQIHRNAPICPLC).

As to expression, expressed in fetal tissues, including in brain, intestine, lung, kidney and muscle. Isoform 1 is expressed in numerous fetal brain regions. Isoform 3 is highly expressed in numerous fetal brain regions and spinal cord.

Its subcellular location is the cytoplasm. It localises to the nucleus. The protein resides in the postsynaptic cell membrane. In terms of biological role, plays a role in interneurons differentiation. Involved in neuronal development and in neuromuscular junction formation. In Homo sapiens (Human), this protein is Zinc finger C4H2 domain-containing protein (ZC4H2).